Consider the following 123-residue polypeptide: uncharacterized protein (123 aa).

Positions 1–25 are cleaved as a signal peptide; it reads MKHGIKALLITLSLACAGMSHSALA. The span at 40–53 shows a compositional bias: low complexity; the sequence is EAPAAQSKAAVPAK. The disordered stretch occupies residues 40–62; that stretch reads EAPAAQSKAAVPAKASDEEGTRV. 2 consecutive HhH domains span residues 60–90 and 91–120; these read TRVSINNASAEELARAMNGVGLKKAQAIVSY and REEYGPFKTVEDLKQVPGMGNSLVERNLAV.

This is an uncharacterized protein from Escherichia coli (strain K12).